The sequence spans 455 residues: Bifunctional protein GlmU (455 aa).

The segment at 1–230 (MANRFAVILA…FDETIGINDR (230 aa)) is pyrophosphorylase. Residues 9–12 (LAAG), Lys23, Gln73, and 78–79 (GT) each bind UDP-N-acetyl-alpha-D-glucosamine. A Mg(2+)-binding site is contributed by Asp103. Positions 140, 155, 170, and 228 each coordinate UDP-N-acetyl-alpha-D-glucosamine. Asn228 contacts Mg(2+). The tract at residues 231-251 (IALAEAEKIMKKRINEQHMRN) is linker. The interval 252-455 (GVSIIDPEQT…KEEYASKFKK (204 aa)) is N-acetyltransferase. UDP-N-acetyl-alpha-D-glucosamine is bound by residues Arg333 and Lys351. The active-site Proton acceptor is His363. The UDP-N-acetyl-alpha-D-glucosamine site is built by Tyr366 and Asn377. Residues 386–387 (NY), Ala423, and Arg440 each bind acetyl-CoA.

It in the N-terminal section; belongs to the N-acetylglucosamine-1-phosphate uridyltransferase family. The protein in the C-terminal section; belongs to the transferase hexapeptide repeat family. Homotrimer. Mg(2+) serves as cofactor.

Its subcellular location is the cytoplasm. It carries out the reaction alpha-D-glucosamine 1-phosphate + acetyl-CoA = N-acetyl-alpha-D-glucosamine 1-phosphate + CoA + H(+). The enzyme catalyses N-acetyl-alpha-D-glucosamine 1-phosphate + UTP + H(+) = UDP-N-acetyl-alpha-D-glucosamine + diphosphate. It functions in the pathway nucleotide-sugar biosynthesis; UDP-N-acetyl-alpha-D-glucosamine biosynthesis; N-acetyl-alpha-D-glucosamine 1-phosphate from alpha-D-glucosamine 6-phosphate (route II): step 2/2. Its pathway is nucleotide-sugar biosynthesis; UDP-N-acetyl-alpha-D-glucosamine biosynthesis; UDP-N-acetyl-alpha-D-glucosamine from N-acetyl-alpha-D-glucosamine 1-phosphate: step 1/1. The protein operates within bacterial outer membrane biogenesis; LPS lipid A biosynthesis. Its function is as follows. Catalyzes the last two sequential reactions in the de novo biosynthetic pathway for UDP-N-acetylglucosamine (UDP-GlcNAc). The C-terminal domain catalyzes the transfer of acetyl group from acetyl coenzyme A to glucosamine-1-phosphate (GlcN-1-P) to produce N-acetylglucosamine-1-phosphate (GlcNAc-1-P), which is converted into UDP-GlcNAc by the transfer of uridine 5-monophosphate (from uridine 5-triphosphate), a reaction catalyzed by the N-terminal domain. The chain is Bifunctional protein GlmU from Oceanobacillus iheyensis (strain DSM 14371 / CIP 107618 / JCM 11309 / KCTC 3954 / HTE831).